We begin with the raw amino-acid sequence, 130 residues long: uncharacterized protein (130 aa).

The segment at 1 to 34 is disordered; sequence MTAVGGSPPTRRCPATEDRAPATVATPSSTDPTA.

To M.tuberculosis Rv1583c.

This is an uncharacterized protein from Mycobacterium tuberculosis (strain CDC 1551 / Oshkosh).